The sequence spans 500 residues: NAD(P)H-quinone oxidoreductase chain 4, chloroplastic (500 aa).

The next 14 helical transmembrane spans lie at 4–24 (FPWLTLIVVFPIFAGCFIFFL), 35–55 (YTMGICLLELLIMTYVFCYHF), 87–107 (IGPILLTGFITTLATLAAWPV), 113–130 (LFHFLMLAMYSGQIGLFS), 134–154 (LLLFFMMWELELIPVYLLLSM), 167–187 (FILYTAGGSIFLLIGVLGMGL), 208–228 (GLEILLYFGFLIAFAVKLPII), 242–262 (HYSTCMLLAGILLKMGAYGLI), 274–294 (SIFSPWLVIVGTIQIIYAALT), 305–325 (IAYSSVSHMGFIIIGIGSLTN), 330–350 (GAILQLLSHGFIGAALFFLGG), 386–406 (LALPGMSGFVAELMVFLGIIT), 416–436 (IIITLVMAIGIILTPIYLLSM), and 463–483 (FVSICIFLPVIAIGIYPDLVI).

It belongs to the complex I subunit 4 family.

It is found in the plastid. The protein localises to the chloroplast thylakoid membrane. It carries out the reaction a plastoquinone + NADH + (n+1) H(+)(in) = a plastoquinol + NAD(+) + n H(+)(out). The catalysed reaction is a plastoquinone + NADPH + (n+1) H(+)(in) = a plastoquinol + NADP(+) + n H(+)(out). The protein is NAD(P)H-quinone oxidoreductase chain 4, chloroplastic of Lemna minor (Common duckweed).